A 146-amino-acid polypeptide reads, in one-letter code: MTTRFKKNRKKRGHVSAGHGRIGKHRKHPGGRGNAGGMHHHRILFDKYHPGYFGKVGMRYFHKLRNKFFCPIVNLDKLWSLVPEDVKAKSTKDNVPLIDVTQHGFFKVLGKGHLPENKPFVVKAKLISKTAEKKIKEAGGAVVLTA.

2 stretches are compositionally biased toward basic residues: residues 1–14 and 21–30; these read MTTRFKKNRKKRGH and RIGKHRKHPG. The interval 1 to 35 is disordered; the sequence is MTTRFKKNRKKRGHVSAGHGRIGKHRKHPGGRGNA.

It belongs to the universal ribosomal protein uL15 family.

The protein is Large ribosomal subunit protein uL15x (RPL27AC) of Arabidopsis thaliana (Mouse-ear cress).